The chain runs to 680 residues: PAN2-PAN3 deadenylation complex subunit PAN3 (680 aa).

Disordered regions lie at residues 1 to 26 (MATTRYNSNDFRRQLGSPRPKGRADT), 51 to 87 (HDQTKKSPKPDATTRKTLNVDSAPFTPAVSSQPSKKT), and 99 to 120 (FTPRATAATPTGTPTAQETDIP). Residues 25–54 (DTKDTLCRNILIYGHCRYEDAGCAFNHDQT) form a C3H1-type zinc finger. Basic and acidic residues predominate over residues 52–64 (DQTKKSPKPDATT). The PABPC-interacting motif-2 (PAM-2) motif lies at 62–82 (ATTRKTLNVDSAPFTPAVSSQ). Positions 99–117 (FTPRATAATPTGTPTAQET) are enriched in low complexity. The tract at residues 256 to 522 (QTMTGTAALQ…TVKNLVAGIN (267 aa)) is pseudokinase domain. Residues Arg311, 360–367 (EYYPLAET), and 422–423 (TK) contribute to the ATP site. The stretch at 523 to 561 (EHVMTAFDAQQRQSDMLYSELYREVENGRVLRLLMKLAT) forms a coiled coil. The segment at 562 to 680 (INERTEYDKD…VHHPSHRDRF (119 aa)) is knob domain. Over residues 655–669 (SGNGRGGPVASGSGH) the composition is skewed to gly residues. A disordered region spans residues 655-680 (SGNGRGGPVASGSGHGVHHPSHRDRF). The span at 670–680 (GVHHPSHRDRF) shows a compositional bias: basic residues.

Belongs to the protein kinase superfamily. PAN3 family. In terms of assembly, homodimer. Forms a heterotrimer with a catalytic subunit PAN2 to form the poly(A)-nuclease (PAN) deadenylation complex. Interacts (via PAM-2 motif) with poly(A)-binding protein PAB1 (via PABC domain), conferring substrate specificity of the enzyme complex.

It is found in the cytoplasm. Regulatory subunit of the poly(A)-nuclease (PAN) deadenylation complex, one of two cytoplasmic mRNA deadenylases involved in mRNA turnover. PAN specifically shortens poly(A) tails of RNA and the activity is stimulated by poly(A)-binding protein PAB1. PAN deadenylation is followed by rapid degradation of the shortened mRNA tails by the CCR4-NOT complex. Deadenylated mRNAs are then degraded by two alternative mechanisms, namely exosome-mediated 3'-5' exonucleolytic degradation, or deadenylation-dependent mRNA decaping and subsequent 5'-3' exonucleolytic degradation by XRN1. May also be involved in post-transcriptional maturation of mRNA poly(A) tails. PAN3 acts as a positive regulator for PAN activity, recruiting the catalytic subunit PAN2 to mRNA via its interaction with RNA and with PAB1. In Pyricularia oryzae (strain 70-15 / ATCC MYA-4617 / FGSC 8958) (Rice blast fungus), this protein is PAN2-PAN3 deadenylation complex subunit PAN3.